A 125-amino-acid chain; its full sequence is uncharacterized protein (125 aa).

3 consecutive transmembrane segments (helical) span residues 20 to 42, 57 to 76, and 81 to 103; these read RNGG…LTIL, LMNA…GVVV, and YLFV…YMAS.

The protein localises to the cell membrane. This is an uncharacterized protein from Archaeoglobus fulgidus (strain ATCC 49558 / DSM 4304 / JCM 9628 / NBRC 100126 / VC-16).